Here is a 263-residue protein sequence, read N- to C-terminus: E3 ubiquitin-protein ligase SINA-like 8 (263 aa).

Residues 35 to 71 (CPICCEGLTCPIFQCENGHLACSSCCPKLRNKCPACP) form an RING-type; degenerate zinc finger. An SBD region spans residues 75-261 (ILESILVTCP…IKLSIVETSN (187 aa)). The SIAH-type zinc finger occupies 78–136 (SILVTCPNDMFGCTESFLYGKKSTHEEECIFSLCSCPSLDCEYSGRYEDLYDHYKLTHI). Cys-83, Cys-90, His-102, Cys-106, Cys-113, Cys-118, His-130, and His-135 together coordinate Zn(2+).

It belongs to the SINA (Seven in absentia) family.

It catalyses the reaction S-ubiquitinyl-[E2 ubiquitin-conjugating enzyme]-L-cysteine + [acceptor protein]-L-lysine = [E2 ubiquitin-conjugating enzyme]-L-cysteine + N(6)-ubiquitinyl-[acceptor protein]-L-lysine.. Its pathway is protein modification; protein ubiquitination. Functionally, E3 ubiquitin-protein ligase that mediates ubiquitination and subsequent proteasomal degradation of target proteins. E3 ubiquitin ligases accept ubiquitin from an E2 ubiquitin-conjugating enzyme in the form of a thioester and then directly transfers the ubiquitin to targeted substrates. It probably triggers the ubiquitin-mediated degradation of different substrates. The chain is E3 ubiquitin-protein ligase SINA-like 8 from Arabidopsis thaliana (Mouse-ear cress).